Here is a 129-residue protein sequence, read N- to C-terminus: uncharacterized protein (129 aa).

Residues 8-24 form a helical membrane-spanning segment; that stretch reads YLILFITIIAICSLFRI.

It is found in the membrane. This is an uncharacterized protein from Rickettsia prowazekii (strain Madrid E).